A 330-amino-acid chain; its full sequence is Small ribosomal subunit protein uS15m (330 aa).

It belongs to the universal ribosomal protein uS15 family. As to quaternary structure, component of the mitochondrial ribosome small subunit (28S) which comprises a 12S rRNA and about 30 distinct proteins.

The protein localises to the mitochondrion. This Caenorhabditis elegans protein is Small ribosomal subunit protein uS15m (mrps-15).